Reading from the N-terminus, the 272-residue chain is Phosphoglycolate phosphatase (272 aa).

D19 acts as the Nucleophile in catalysis. D19, D21, and D182 together coordinate Mg(2+).

This sequence belongs to the HAD-like hydrolase superfamily. CbbY/CbbZ/Gph/YieH family. The cofactor is Mg(2+).

It carries out the reaction 2-phosphoglycolate + H2O = glycolate + phosphate. It participates in organic acid metabolism; glycolate biosynthesis; glycolate from 2-phosphoglycolate: step 1/1. In terms of biological role, specifically catalyzes the dephosphorylation of 2-phosphoglycolate. Is involved in the dissimilation of the intracellular 2-phosphoglycolate formed during the DNA repair of 3'-phosphoglycolate ends, a major class of DNA lesions induced by oxidative stress. In Pseudomonas savastanoi pv. phaseolicola (strain 1448A / Race 6) (Pseudomonas syringae pv. phaseolicola (strain 1448A / Race 6)), this protein is Phosphoglycolate phosphatase.